Here is a 421-residue protein sequence, read N- to C-terminus: UDP-N-acetylglucosamine 1-carboxyvinyltransferase 1 (421 aa).

22–23 lines the phosphoenolpyruvate pocket; the sequence is KN. Arginine 94 is a UDP-N-acetyl-alpha-D-glucosamine binding site. Cysteine 118 functions as the Proton donor in the catalytic mechanism. Cysteine 118 bears the 2-(S-cysteinyl)pyruvic acid O-phosphothioketal mark. Residues 123–127, aspartate 310, and valine 332 each bind UDP-N-acetyl-alpha-D-glucosamine; that span reads RPIEL.

This sequence belongs to the EPSP synthase family. MurA subfamily.

The protein localises to the cytoplasm. It catalyses the reaction phosphoenolpyruvate + UDP-N-acetyl-alpha-D-glucosamine = UDP-N-acetyl-3-O-(1-carboxyvinyl)-alpha-D-glucosamine + phosphate. Its pathway is cell wall biogenesis; peptidoglycan biosynthesis. Cell wall formation. Adds enolpyruvyl to UDP-N-acetylglucosamine. The polypeptide is UDP-N-acetylglucosamine 1-carboxyvinyltransferase 1 (Clostridium perfringens (strain 13 / Type A)).